We begin with the raw amino-acid sequence, 305 residues long: Spermatogenesis-associated protein 4 (305 aa).

Positions serine 49–arginine 155 constitute a Calponin-homology (CH) domain.

It is found in the nucleus. Its function is as follows. May play a role in apoptosis regulation. The chain is Spermatogenesis-associated protein 4 (SPATA4) from Pan troglodytes (Chimpanzee).